Reading from the N-terminus, the 282-residue chain is Peptidoglycan-recognition protein LD (282 aa).

Residues 1-29 (MDSSHIAVRVARRSPSPAAVSQSSYGSLG) are disordered. Over 1-88 (MDSSHIAVRV…RRNPTLHEDC (88 aa)) the chain is Cytoplasmic. Residues 89–111 (FNWRSVGLLVMCASALALAAYLL) form a helical membrane-spanning segment. Topologically, residues 112–282 (WRQTQTPDFG…PHYASHQTSK (171 aa)) are extracellular. Residues cysteine 162 and cysteine 166 are joined by a disulfide bond. Asparagine 222 carries N-linked (GlcNAc...) asparagine glycosylation.

The protein belongs to the N-acetylmuramoyl-L-alanine amidase 2 family. In terms of tissue distribution, expressed in uninduced hemocytes and mbn-2 cells.

It is found in the cell membrane. Functionally, peptidoglycan-recognition protein probably involved in innate immunity by binding to peptidoglycans (PGN) of bacteria and activating the immune response. The polypeptide is Peptidoglycan-recognition protein LD (PGRP-LD) (Drosophila melanogaster (Fruit fly)).